The following is a 180-amino-acid chain: Nucleoside triphosphate/diphosphate phosphatase (180 aa).

Arg-26 (proton donor) is an active-site residue. The Mg(2+) site is built by Asn-90, Asp-106, Asp-108, Asp-110, Asp-123, and Glu-126.

Belongs to the Ntdp family. Mg(2+) is required as a cofactor.

It catalyses the reaction a ribonucleoside 5'-triphosphate + H2O = a ribonucleoside 5'-diphosphate + phosphate + H(+). It carries out the reaction a ribonucleoside 5'-diphosphate + H2O = a ribonucleoside 5'-phosphate + phosphate + H(+). Has nucleoside phosphatase activity towards nucleoside triphosphates and nucleoside diphosphates. The polypeptide is Nucleoside triphosphate/diphosphate phosphatase (Staphylococcus haemolyticus (strain JCSC1435)).